The chain runs to 74 residues: Large ribosomal subunit protein bL31 (74 aa).

Zn(2+) contacts are provided by Cys-17, Cys-19, Cys-38, and Cys-41.

Belongs to the bacterial ribosomal protein bL31 family. Type A subfamily. In terms of assembly, part of the 50S ribosomal subunit. It depends on Zn(2+) as a cofactor.

Binds the 23S rRNA. In Gloeobacter violaceus (strain ATCC 29082 / PCC 7421), this protein is Large ribosomal subunit protein bL31.